The chain runs to 246 residues: MIRFLIPTAKEMKPSKEVPSQKLSEKSEAILTEMAKLSTDDLSIAYKIKPEQAEKEKQRWDAILAGEAKNYPAVELFNGLMYRHIKRKDLSTCEKDFLSHQVFITSSFYGIIPAFYPIQEHRHDFHTKVKVNGQSLKNYWRAEYDQFLEEGQVPVVSLLSSEFEDVFSPSLRKQLFTVSFMEDRNGILKTHSTISKKARGAFLTAVMEESCQTIDALRDLSFDDFYYRKDLSSDSELFFVRKVKKV.

Belongs to the UPF0246 family.

This is UPF0246 protein stu1967 from Streptococcus thermophilus (strain ATCC BAA-250 / LMG 18311).